Consider the following 167-residue polypeptide: RNA pyrophosphohydrolase (167 aa).

Residues 8–158 (PYRRNVGAML…KRDIYRTLVR (151 aa)) enclose the Nudix hydrolase domain. Positions 49-70 (GGIDADEDPEEAVLRELREEIG) match the Nudix box motif.

It belongs to the Nudix hydrolase family. RppH subfamily. The cofactor is a divalent metal cation.

In terms of biological role, accelerates the degradation of transcripts by removing pyrophosphate from the 5'-end of triphosphorylated RNA, leading to a more labile monophosphorylated state that can stimulate subsequent ribonuclease cleavage. The chain is RNA pyrophosphohydrolase from Gluconacetobacter diazotrophicus (strain ATCC 49037 / DSM 5601 / CCUG 37298 / CIP 103539 / LMG 7603 / PAl5).